We begin with the raw amino-acid sequence, 120 residues long: Seripauperin-6 (120 aa).

A signal peptide spans methionine 1–alanine 20.

This sequence belongs to the SRP1/TIP1 family. Seripauperin subfamily.

In Saccharomyces cerevisiae (strain ATCC 204508 / S288c) (Baker's yeast), this protein is Seripauperin-6 (PAU6).